A 406-amino-acid chain; its full sequence is Vitamin D3 dihydroxylase (406 aa).

Residues 1–15 (MTDTATTPQTTDAPA) show a composition bias toward low complexity. Residues 1–24 (MTDTATTPQTTDAPAFPSNRSCPY) are disordered. Threonine 81 serves as a coordination point for calciol. 2 residues coordinate heme: histidine 103 and arginine 107. Calciol-binding residues include arginine 193, serine 236, and isoleucine 293. Residues arginine 297, histidine 353, and cysteine 355 each contribute to the heme site.

The protein belongs to the cytochrome P450 family. Requires heme as cofactor.

Its subcellular location is the cytoplasm. The catalysed reaction is calciol + 2 reduced [2Fe-2S]-[ferredoxin] + O2 + 2 H(+) = calcidiol + 2 oxidized [2Fe-2S]-[ferredoxin] + H2O. The enzyme catalyses calcidiol + 2 reduced [2Fe-2S]-[ferredoxin] + O2 + 2 H(+) = calcitriol + 2 oxidized [2Fe-2S]-[ferredoxin] + H2O. Its function is as follows. Involved in the metabolism of vitamin D3 (calciol) and of a number of sulfonylurea herbicides. Catalyzes the two-step hydroxylation (25- and 1-alpha-hydroxylation) of vitamin D3 (VD3) to yield its active form 1-alpha,25-dihydroxyvitamin D3 (calcitriol). The first step is the hydroxylation of the C-25 position of VD3 to produce 25-hydroxyvitamin D3 (calcidiol). The second reaction is the hydroxylation of the C1-alpha-position of calcidiol to produce calcitriol. It can also hydroxylate vitamin D2. The protein is Vitamin D3 dihydroxylase of Streptomyces griseolus.